The primary structure comprises 203 residues: Peptide deformylase (203 aa).

Fe cation-binding residues include cysteine 130 and histidine 173. Glutamate 174 is an active-site residue. Histidine 177 provides a ligand contact to Fe cation.

The protein belongs to the polypeptide deformylase family. Requires Fe(2+) as cofactor.

The enzyme catalyses N-terminal N-formyl-L-methionyl-[peptide] + H2O = N-terminal L-methionyl-[peptide] + formate. Removes the formyl group from the N-terminal Met of newly synthesized proteins. Requires at least a dipeptide for an efficient rate of reaction. N-terminal L-methionine is a prerequisite for activity but the enzyme has broad specificity at other positions. The polypeptide is Peptide deformylase (Streptococcus pneumoniae serotype 19F (strain G54)).